Here is a 166-residue protein sequence, read N- to C-terminus: Large ribosomal subunit protein uL10 (166 aa).

It belongs to the universal ribosomal protein uL10 family. As to quaternary structure, part of the ribosomal stalk of the 50S ribosomal subunit. The N-terminus interacts with L11 and the large rRNA to form the base of the stalk. The C-terminus forms an elongated spine to which L12 dimers bind in a sequential fashion forming a multimeric L10(L12)X complex.

In terms of biological role, forms part of the ribosomal stalk, playing a central role in the interaction of the ribosome with GTP-bound translation factors. The sequence is that of Large ribosomal subunit protein uL10 from Phytoplasma australiense.